A 146-amino-acid chain; its full sequence is Cyanate hydratase (146 aa).

Active-site residues include arginine 87, glutamate 90, and serine 113.

It belongs to the cyanase family.

It catalyses the reaction cyanate + hydrogencarbonate + 3 H(+) = NH4(+) + 2 CO2. In terms of biological role, catalyzes the reaction of cyanate with bicarbonate to produce ammonia and carbon dioxide. The protein is Cyanate hydratase of Synechococcus elongatus (strain ATCC 33912 / PCC 7942 / FACHB-805) (Anacystis nidulans R2).